The following is a 200-amino-acid chain: Small ribosomal subunit protein uS4 (200 aa).

The segment at 22–42 (TGKELEKRPYAPGPHGPGQRK) is disordered. In terms of domain architecture, S4 RNA-binding spans 92 to 155 (ARLDNVVYKL…RNLSIIKESV (64 aa)).

It belongs to the universal ribosomal protein uS4 family. As to quaternary structure, part of the 30S ribosomal subunit. Contacts protein S5. The interaction surface between S4 and S5 is involved in control of translational fidelity.

Its function is as follows. One of the primary rRNA binding proteins, it binds directly to 16S rRNA where it nucleates assembly of the body of the 30S subunit. In terms of biological role, with S5 and S12 plays an important role in translational accuracy. The sequence is that of Small ribosomal subunit protein uS4 from Bacillus velezensis (strain DSM 23117 / BGSC 10A6 / LMG 26770 / FZB42) (Bacillus amyloliquefaciens subsp. plantarum).